Reading from the N-terminus, the 181-residue chain is MFRGGTHRLRGQPGLSLPHGPRCYGSAPPELQEKTLVLVKPDAVQRRLVGNVIQRFERRGFKLVAMKLLQADQGLLDKHYQQLRQKPFYPALLAYMTSGPLVAMVWEGYNVVRSTRAMVGDTDSAVAAAGTIRGDFSMHVSRNVVHASDSVETAQREIGFWFQRNELVAWESGDRDYTWGP.

Residues 1 to 10 (MFRGGTHRLR) show a composition bias toward basic residues. The tract at residues 1–22 (MFRGGTHRLRGQPGLSLPHGPR) is disordered. The N-terminal 24 residues, 1–24 (MFRGGTHRLRGQPGLSLPHGPRCY), are a transit peptide targeting the mitochondrion. Residues lysine 40, phenylalanine 88, arginine 116, threonine 122, arginine 133, and asparagine 143 each coordinate ATP. Residue histidine 146 is the Pros-phosphohistidine intermediate of the active site.

This sequence belongs to the NDK family. Mg(2+) serves as cofactor. Highest levels in the liver and kidney with lower levels in the heart, brain and breast muscle.

Its subcellular location is the mitochondrion intermembrane space. The protein resides in the mitochondrion matrix. It catalyses the reaction a 2'-deoxyribonucleoside 5'-diphosphate + ATP = a 2'-deoxyribonucleoside 5'-triphosphate + ADP. The enzyme catalyses a ribonucleoside 5'-diphosphate + ATP = a ribonucleoside 5'-triphosphate + ADP. Its activity is regulated as follows. Feedback inhibition by ADP. Its function is as follows. Major role in the synthesis of nucleoside triphosphates other than ATP. The ATP gamma phosphate is transferred to the NDP beta phosphate via a ping-pong mechanism, using a phosphorylated active-site intermediate. Through the catalyzed exchange of gamma-phosphate between di- and triphosphonucleosides participates in regulation of intracellular nucleotide homeostasis. Binds to anionic phospholipids, predominantly to cardiolipin; the binding inhibits its phosphotransfer activity. Acts as a mitochondria-specific NDK coupled to respiration. Promotes the redistribution of cardiolipin between the mitochondrial inner membrane and outer membrane which is implicated in pro-apoptotic signaling. In Columba livia (Rock dove), this protein is Nucleoside diphosphate kinase, mitochondrial (NME4).